A 353-amino-acid chain; its full sequence is Deoxyribonuclease-2-alpha (353 aa).

The N-terminal stretch at 1-19 (MATLRSLLLAALLWVPAEA) is a signal peptide. C22 and C161 are joined by a disulfide. 4 N-linked (GlcNAc...) asparagine glycosylation sites follow: N71, N88, N214, and N268. 2 disulfide bridges follow: C269–C349 and C310–C329. Residue H297 is part of the active site.

Belongs to the DNase II family. In terms of tissue distribution, highly expressed in fetal liver macrophages.

The protein resides in the lysosome. It catalyses the reaction Endonucleolytic cleavage to nucleoside 3'-phosphates and 3'-phosphooligonucleotide end-products.. Its function is as follows. Hydrolyzes DNA under acidic conditions with a preference for double-stranded DNA. Plays a major role in the clearance of nucleic acids generated through apoptosis, hence preventing autoinflammation. Necessary for proper fetal development and for definitive erythropoiesis in fetal liver and bone marrow, where it degrades nuclear DNA expelled from erythroid precursor cells. This is Deoxyribonuclease-2-alpha (Dnase2) from Mus musculus (Mouse).